Consider the following 338-residue polypeptide: S-adenosylmethionine:tRNA ribosyltransferase-isomerase (338 aa).

Belongs to the QueA family. As to quaternary structure, monomer.

The protein localises to the cytoplasm. It catalyses the reaction 7-aminomethyl-7-carbaguanosine(34) in tRNA + S-adenosyl-L-methionine = epoxyqueuosine(34) in tRNA + adenine + L-methionine + 2 H(+). The protein operates within tRNA modification; tRNA-queuosine biosynthesis. Its function is as follows. Transfers and isomerizes the ribose moiety from AdoMet to the 7-aminomethyl group of 7-deazaguanine (preQ1-tRNA) to give epoxyqueuosine (oQ-tRNA). This is S-adenosylmethionine:tRNA ribosyltransferase-isomerase from Francisella tularensis subsp. tularensis (strain WY96-3418).